Consider the following 389-residue polypeptide: 8-amino-7-oxononanoate synthase (389 aa).

Substrate is bound at residue arginine 23. Residue 114–115 (GY) coordinates pyridoxal 5'-phosphate. Histidine 139 lines the substrate pocket. Residues serine 185, histidine 213, and threonine 242 each coordinate pyridoxal 5'-phosphate. An N6-(pyridoxal phosphate)lysine modification is found at lysine 245. Threonine 357 is a substrate binding site.

The protein belongs to the class-II pyridoxal-phosphate-dependent aminotransferase family. BioF subfamily. As to quaternary structure, homodimer. It depends on pyridoxal 5'-phosphate as a cofactor.

It carries out the reaction 6-carboxyhexanoyl-[ACP] + L-alanine + H(+) = (8S)-8-amino-7-oxononanoate + holo-[ACP] + CO2. It functions in the pathway cofactor biosynthesis; biotin biosynthesis. Catalyzes the decarboxylative condensation of pimeloyl-[acyl-carrier protein] and L-alanine to produce 8-amino-7-oxononanoate (AON), [acyl-carrier protein], and carbon dioxide. The protein is 8-amino-7-oxononanoate synthase of Acidithiobacillus ferrooxidans (strain ATCC 23270 / DSM 14882 / CIP 104768 / NCIMB 8455) (Ferrobacillus ferrooxidans (strain ATCC 23270)).